Consider the following 157-residue polypeptide: Endoribonuclease YbeY (157 aa).

Zn(2+) is bound by residues His122, His126, and His132.

This sequence belongs to the endoribonuclease YbeY family. Zn(2+) serves as cofactor.

The protein localises to the cytoplasm. Single strand-specific metallo-endoribonuclease involved in late-stage 70S ribosome quality control and in maturation of the 3' terminus of the 16S rRNA. This chain is Endoribonuclease YbeY, found in Bacillus velezensis (strain DSM 23117 / BGSC 10A6 / LMG 26770 / FZB42) (Bacillus amyloliquefaciens subsp. plantarum).